Reading from the N-terminus, the 276-residue chain is WIMGHMVNAIYQIDEFVNLGANSIETDVSFDDSANPEYTYHGVPCDCRRWCKKWEYFNNFLKALRKATTPGDSKYHEKLVLVVFDLKTNSLYDHQAYDAGKKLAKNLLQHYWNNGNNGGRAYIVLSIPNLSHYKLITGFKETLKNEGHPELMEKVGFDFSGNDNIDQVAKAYKKAGVTGRVWQSDGITNCIASFIRGLDRAKEAVANRDSSNGFINKVYYWTVDKRATTREALDAEVDGIMTNDPDVIADVLNESAYKAKFRIATYDDNPWETFKK.

Residue His5 is part of the active site. Positions 25 and 27 each coordinate Mg(2+). The Nucleophile role is filled by His41. 2 cysteine pairs are disulfide-bonded: Cys45/Cys51 and Cys47/Cys190. Asp85 contacts Mg(2+). N-linked (GlcNAc...) asparagine glycans are attached at residues Asn129 and Asn253.

It belongs to the arthropod phospholipase D family. Class II subfamily. Mg(2+) is required as a cofactor. In terms of tissue distribution, expressed by the venom gland.

The protein resides in the secreted. The catalysed reaction is an N-(acyl)-sphingosylphosphocholine = an N-(acyl)-sphingosyl-1,3-cyclic phosphate + choline. It catalyses the reaction an N-(acyl)-sphingosylphosphoethanolamine = an N-(acyl)-sphingosyl-1,3-cyclic phosphate + ethanolamine. It carries out the reaction a 1-acyl-sn-glycero-3-phosphocholine = a 1-acyl-sn-glycero-2,3-cyclic phosphate + choline. The enzyme catalyses a 1-acyl-sn-glycero-3-phosphoethanolamine = a 1-acyl-sn-glycero-2,3-cyclic phosphate + ethanolamine. Functionally, dermonecrotic toxins cleave the phosphodiester linkage between the phosphate and headgroup of certain phospholipids (sphingolipid and lysolipid substrates), forming an alcohol (often choline) and a cyclic phosphate. This toxin acts on sphingomyelin (SM). It may also act on ceramide phosphoethanolamine (CPE), lysophosphatidylcholine (LPC) and lysophosphatidylethanolamine (LPE), but not on lysophosphatidylserine (LPS), and lysophosphatidylglycerol (LPG). It acts by transphosphatidylation, releasing exclusively cyclic phosphate products as second products. Induces dermonecrosis, hemolysis, increased vascular permeability, edema, inflammatory response, and platelet aggregation. The protein is Dermonecrotic toxin LsaSicTox-alphaIB2iii of Loxosceles sabina (Tucson recluse spider).